A 200-amino-acid chain; its full sequence is Potassium-transporting ATPase KdpC subunit (200 aa).

A helical transmembrane segment spans residues 13 to 33 (ITLIFWLITAIIYPLAILVVG).

The protein belongs to the KdpC family. In terms of assembly, the system is composed of three essential subunits: KdpA, KdpB and KdpC.

It localises to the cell membrane. Functionally, part of the high-affinity ATP-driven potassium transport (or Kdp) system, which catalyzes the hydrolysis of ATP coupled with the electrogenic transport of potassium into the cytoplasm. This subunit acts as a catalytic chaperone that increases the ATP-binding affinity of the ATP-hydrolyzing subunit KdpB by the formation of a transient KdpB/KdpC/ATP ternary complex. In Anabaena sp. (strain L31), this protein is Potassium-transporting ATPase KdpC subunit.